A 29-amino-acid chain; its full sequence is U-limacoditoxin(12)-Dv72 (29 aa).

A signal peptide spans 1-15; the sequence is MNFGMLKLLTVLIIC. N27 carries the asparagine amide modification.

This sequence belongs to the limacoditoxin-12 family. In terms of tissue distribution, expressed by the venom secretory cell of the spine. The spine is a cuticular structure containing a single large nucleated venom-secreting cell at its base. It is an independent unit capable of producing, storing and injecting venom. On the back of D.vulnerans caterpillars, spines are grouped together by 50 to 100 to form scoli, of which there are eight in D.vulnerans.

It is found in the secreted. Probable toxin. Does not show insecticidal, antimicrobial and antiparasitic activities. Does not induce increase in intracellular calcium in mouse DRG neurons, suggesting that it does not induce pain. The sequence is that of U-limacoditoxin(12)-Dv72 from Doratifera vulnerans (Mottled cup moth).